The chain runs to 137 residues: Large ribosomal subunit protein uL16 (137 aa).

The protein belongs to the universal ribosomal protein uL16 family. In terms of assembly, part of the 50S ribosomal subunit.

Its function is as follows. Binds 23S rRNA and is also seen to make contacts with the A and possibly P site tRNAs. This Pseudomonas syringae pv. tomato (strain ATCC BAA-871 / DC3000) protein is Large ribosomal subunit protein uL16.